We begin with the raw amino-acid sequence, 284 residues long: 4-diphosphocytidyl-2-C-methyl-D-erythritol kinase (284 aa).

The active site involves Lys-13. Residue 96–106 participates in ATP binding; sequence PMGGGLGGGSS. Asp-138 is a catalytic residue.

This sequence belongs to the GHMP kinase family. IspE subfamily.

It carries out the reaction 4-CDP-2-C-methyl-D-erythritol + ATP = 4-CDP-2-C-methyl-D-erythritol 2-phosphate + ADP + H(+). It participates in isoprenoid biosynthesis; isopentenyl diphosphate biosynthesis via DXP pathway; isopentenyl diphosphate from 1-deoxy-D-xylulose 5-phosphate: step 3/6. Its function is as follows. Catalyzes the phosphorylation of the position 2 hydroxy group of 4-diphosphocytidyl-2C-methyl-D-erythritol. The polypeptide is 4-diphosphocytidyl-2-C-methyl-D-erythritol kinase (Chromobacterium violaceum (strain ATCC 12472 / DSM 30191 / JCM 1249 / CCUG 213 / NBRC 12614 / NCIMB 9131 / NCTC 9757 / MK)).